The sequence spans 735 residues: Transcription factor RFX4 (735 aa).

The disordered stretch occupies residues 25-59; the sequence is SESKRFSSHSSIGNISNDENEEKENNRASKPHSTP. A DNA-binding region spans residues 44 to 126; the sequence is NEEKENNRAS…RRLGTRGQSK (83 aa). The RFX-type winged-helix DNA-binding region spans 61–136; it reads TLQWLEENYE…YHYYGIAVKE (76 aa). The tract at residues 315–487 is necessary for dimerization; the sequence is RFSQILKRQT…NELMRAMKGE (173 aa).

Belongs to the RFX family.

It is found in the nucleus. Its function is as follows. May activate transcription by interacting directly with the X-box. The polypeptide is Transcription factor RFX4 (rfx4) (Danio rerio (Zebrafish)).